Reading from the N-terminus, the 159-residue chain is Cytochrome c-type biogenesis protein CcmE (159 aa).

The Cytoplasmic segment spans residues 1–23 (MSSQSFHNSPSLRVILKQRKKKR). Residues 24 to 44 (LLIVLFCCLIIAIATSLITYA) traverse the membrane as a helical; Signal-anchor for type II membrane protein segment. Topologically, residues 45–159 (LRNTVSFFRM…RLNKHHRVEK (115 aa)) are periplasmic. Heme is bound by residues H138 and Y142.

The protein belongs to the CcmE/CycJ family.

It localises to the cell inner membrane. Heme chaperone required for the biogenesis of c-type cytochromes. Transiently binds heme delivered by CcmC and transfers the heme to apo-cytochromes in a process facilitated by CcmF and CcmH. This Bartonella henselae (strain ATCC 49882 / DSM 28221 / CCUG 30454 / Houston 1) (Rochalimaea henselae) protein is Cytochrome c-type biogenesis protein CcmE.